Reading from the N-terminus, the 847-residue chain is DNA ligase (847 aa).

Residues 1-22 (MSDTTTGSDAADAAVPATTPAD) are compositionally biased toward low complexity. Residues 1 to 23 (MSDTTTGSDAADAAVPATTPADL) form a disordered region. Residues 54–58 (DAEYD), 104–105 (SL), and E135 contribute to the NAD(+) site. Residue K137 is the N6-AMP-lysine intermediate of the active site. NAD(+) contacts are provided by R158, E195, K326, and K350. Zn(2+)-binding residues include C444, C447, C463, and C469. A BRCT domain is found at 686-775 (AAGGVLAGLA…PDAIALPEAD (90 aa)). Residues 770–847 (ALPEADPVPD…AEPDGPAETP (78 aa)) form a disordered region. 2 stretches are compositionally biased toward low complexity: residues 786 to 807 (DGGS…ATAE) and 819 to 833 (PAAA…VEAG).

Belongs to the NAD-dependent DNA ligase family. LigA subfamily. Mg(2+) is required as a cofactor. Requires Mn(2+) as cofactor.

The enzyme catalyses NAD(+) + (deoxyribonucleotide)n-3'-hydroxyl + 5'-phospho-(deoxyribonucleotide)m = (deoxyribonucleotide)n+m + AMP + beta-nicotinamide D-nucleotide.. Functionally, DNA ligase that catalyzes the formation of phosphodiester linkages between 5'-phosphoryl and 3'-hydroxyl groups in double-stranded DNA using NAD as a coenzyme and as the energy source for the reaction. It is essential for DNA replication and repair of damaged DNA. This chain is DNA ligase, found in Clavibacter sepedonicus (Clavibacter michiganensis subsp. sepedonicus).